A 480-amino-acid chain; its full sequence is Carboxy-terminal processing protease CtpB (480 aa).

Positions 1–23 (MNQKIMAVIAAGSMLFGGAGVYA) are cleaved as a signal peptide. The 91-residue stretch at 92–182 (SVYMDKQTAK…SSVSMKIQRP (91 aa)) folds into the PDZ domain. Residues 113 to 116 (GIGA) form a peptide binding region. Ser-309 (nucleophile) is an active-site residue. Catalysis depends on charge relay system residues Lys-334 and Gln-338.

It belongs to the peptidase S41A family. In terms of assembly, homodimer. Is cleaved by SpoIVB in vitro and in vivo but this cleavage does not appear to be necessary for CtpB activation. CtpB can also cleave itself in vivo.

The protein localises to the forespore intermembrane space. It carries out the reaction The enzyme shows specific recognition of a C-terminal tripeptide, Xaa-Yaa-Zaa, in which Xaa is preferably Ala or Leu, Yaa is preferably Ala or Tyr, and Zaa is preferably Ala, but then cleaves at a variable distance from the C-terminus. A typical cleavage is -Ala-Ala-|-Arg-Ala-Ala-Lys-Glu-Asn-Tyr-Ala-Leu-Ala-Ala.. Activated by peptide binding to the PDZ domain. Functionally, involved in the signal transduction pathway leading to the proteolytic activation of the mother cell transcription factor pro-sigma-K during sporulation. The signaling serine protease CtpB triggers pro-sigma-K processing by cleaving the pre-processed regulatory protein SpoIVFA and is necessary for the proper timing of sigma-K activation. This is Carboxy-terminal processing protease CtpB (ctpB) from Bacillus subtilis (strain 168).